We begin with the raw amino-acid sequence, 234 residues long: LexA repressor (234 aa).

A DNA-binding region (H-T-H motif) is located at residues 41–61; it reads RAEIAAELGFRSPNAAEEHLK. Residues Ser152 and Lys189 each act as for autocatalytic cleavage activity in the active site.

This sequence belongs to the peptidase S24 family. As to quaternary structure, homodimer.

It catalyses the reaction Hydrolysis of Ala-|-Gly bond in repressor LexA.. Its function is as follows. Represses a number of genes involved in the response to DNA damage (SOS response), including recA and lexA. In the presence of single-stranded DNA, RecA interacts with LexA causing an autocatalytic cleavage which disrupts the DNA-binding part of LexA, leading to derepression of the SOS regulon and eventually DNA repair. This chain is LexA repressor, found in Polaromonas naphthalenivorans (strain CJ2).